The following is a 542-amino-acid chain: CTP synthase (542 aa).

The segment at 1–265 (MTRYIFVTGG…DDFVVERFGL (265 aa)) is amidoligase domain. Ser13 is a CTP binding site. Ser13 contributes to the UTP binding site. ATP-binding positions include 14 to 19 (SLGKGI) and Asp71. Mg(2+) is bound by residues Asp71 and Glu139. CTP is bound by residues 146–148 (DIE), 186–191 (KTKPTQ), and Lys222. UTP-binding positions include 186–191 (KTKPTQ) and Lys222. Positions 290–541 (TIAMVGKYME…VKAALAQKNK (252 aa)) constitute a Glutamine amidotransferase type-1 domain. Gly351 contributes to the L-glutamine binding site. The active-site Nucleophile; for glutamine hydrolysis is Cys378. Residues 379-382 (LGMQ), Glu402, and Arg469 each bind L-glutamine. Residues His514 and Glu516 contribute to the active site.

Belongs to the CTP synthase family. Homotetramer.

It carries out the reaction UTP + L-glutamine + ATP + H2O = CTP + L-glutamate + ADP + phosphate + 2 H(+). The catalysed reaction is L-glutamine + H2O = L-glutamate + NH4(+). The enzyme catalyses UTP + NH4(+) + ATP = CTP + ADP + phosphate + 2 H(+). It functions in the pathway pyrimidine metabolism; CTP biosynthesis via de novo pathway; CTP from UDP: step 2/2. With respect to regulation, allosterically activated by GTP, when glutamine is the substrate; GTP has no effect on the reaction when ammonia is the substrate. The allosteric effector GTP functions by stabilizing the protein conformation that binds the tetrahedral intermediate(s) formed during glutamine hydrolysis. Inhibited by the product CTP, via allosteric rather than competitive inhibition. Catalyzes the ATP-dependent amination of UTP to CTP with either L-glutamine or ammonia as the source of nitrogen. Regulates intracellular CTP levels through interactions with the four ribonucleotide triphosphates. The chain is CTP synthase from Pseudomonas entomophila (strain L48).